The sequence spans 336 residues: Probable long-chain-alcohol O-fatty-acyltransferase 8 (336 aa).

Helical transmembrane passes span 7 to 27 (SFVK…YIPS), 38 to 58 (SVLP…FTIF), 59 to 79 (SSTT…LFAF), 82 to 102 (GPLL…CLPI), 117 to 135 (WVFF…VHNY), 152 to 172 (LYLV…IILG), 228 to 248 (MGCW…YFYI), and 284 to 304 (PMLS…FLFF).

It belongs to the wax synthase family.

Its subcellular location is the membrane. It carries out the reaction a long chain fatty alcohol + a fatty acyl-CoA = a wax ester + CoA. Functionally, catalyzes the final step in the synthesis of long-chain linear esters (waxes). This chain is Probable long-chain-alcohol O-fatty-acyltransferase 8, found in Arabidopsis thaliana (Mouse-ear cress).